The sequence spans 892 residues: MLSAKILERSGYLRKQCPLCKSYFWTLRHDQVYCGDQPCVPYGFIGSPPVKVAVDSLTELRERFLRFFERRGHARIKRYPVVARWRDDVYLVGASIYDFQPWVTSGAVPPPANPLVISQPSIRLTDVDKVGRSGRHLTGFEMMAHHAFNYPDKYVYWIDETTEYAYEFFTKELGITPEEITFKESMWEGGGNAGECYEVLVRGLEVATLVFMHYETKEGKYVELPLKIVDTGYGLERIYWLLKGTPTIYDAVFGPFLDRARQKLGVPEPPAEVMGKASIYFGQMDPEVIGLEKAYDLIAEKIGVDGKWLREVFRPQEALYVLADHSRTVSWMIADGVIPSNSGAGYLARLLIRRILKNLKLAGIEAPLVELIDMHLKELKVDYPEVWAARDLILELVDLEERKYKEILKSAPTVVKKALDEARRRGAASLSPDDLVALYDSFGLPPEIVADVAKTQGVEVKVPDDFYSRLAARHAKKEKQPESTLVEMAKVIDLPRTRELFYEDPYMRSFKAKVLRVVDGKYVVLDQTAFYAEGGGQPGDVGVLKYSGGAAKVVDVQRVGHIIVHVVEGQPPPEGVEVVGEIDWERRYALMKMHTGTHVLIQSIRRVLGPHIWQAGAQKDIPSSRLDVTHYKLPTPEEVAEIERLANSAVQANLPVYVKIMPRNEAEAKYGFILYQGGVVPAREIRVVQIGPDSDPYDVQACGGTHLKSTGEIGIIKIQKVERIADGVVRFIFTTGLHALSYIQELERQLGQAAQVAGGSRDNVVEAVKRLASRAEEAERKWRHYAELYAKQMAQSLKAEQVGRYKLAVVELDDEDLAKKVAEEATGRDKDLVLVVMGGNKLSIFTGGADVAPIVKSLREVGFRGGGSRTFAQGVYSGDVKTLIDALRRALS.

Zn(2+) is bound by residues H594, H598, C702, and H706.

The protein belongs to the class-II aminoacyl-tRNA synthetase family. The cofactor is Zn(2+).

It localises to the cytoplasm. The catalysed reaction is tRNA(Ala) + L-alanine + ATP = L-alanyl-tRNA(Ala) + AMP + diphosphate. Catalyzes the attachment of alanine to tRNA(Ala) in a two-step reaction: alanine is first activated by ATP to form Ala-AMP and then transferred to the acceptor end of tRNA(Ala). Also edits incorrectly charged Ser-tRNA(Ala) and Gly-tRNA(Ala) via its editing domain. The chain is Alanine--tRNA ligase from Pyrobaculum arsenaticum (strain DSM 13514 / JCM 11321 / PZ6).